The primary structure comprises 22 residues: Cysteine protease inhibitor 4 (22 aa).

Belongs to the protease inhibitor I3 (leguminous Kunitz-type inhibitor) family. As to expression, tubers.

The protein localises to the vacuole. Inhibitor of papain (cysteine protease). Does not inhibit trypsin, chymotrypsin nor elastase (serine proteases). May protect the plant by inhibiting proteases of invading organisms. The sequence is that of Cysteine protease inhibitor 4 from Solanum tuberosum (Potato).